Reading from the N-terminus, the 267-residue chain is Neuferricin (267 aa).

The first 17 residues, 1-17 (MLKYLVALISMVLAVWT), serve as a signal peptide directing secretion. The Cytochrome b5 heme-binding domain maps to 53-150 (LLTKEQLSLY…RDYTPVGKLI (98 aa)).

It belongs to the cytochrome b5 family. MAPR subfamily.

The protein resides in the secreted. Functionally, heme-binding protein which promotes neuronal but not astrocyte differentiation. This is Neuferricin (cyb5d2) from Danio rerio (Zebrafish).